The chain runs to 351 residues: S-adenosylmethionine:tRNA ribosyltransferase-isomerase (351 aa).

Belongs to the QueA family. Monomer.

It is found in the cytoplasm. It catalyses the reaction 7-aminomethyl-7-carbaguanosine(34) in tRNA + S-adenosyl-L-methionine = epoxyqueuosine(34) in tRNA + adenine + L-methionine + 2 H(+). Its pathway is tRNA modification; tRNA-queuosine biosynthesis. Functionally, transfers and isomerizes the ribose moiety from AdoMet to the 7-aminomethyl group of 7-deazaguanine (preQ1-tRNA) to give epoxyqueuosine (oQ-tRNA). The sequence is that of S-adenosylmethionine:tRNA ribosyltransferase-isomerase from Photobacterium profundum (strain SS9).